We begin with the raw amino-acid sequence, 261 residues long: uncharacterized protein (261 aa).

This sequence belongs to the FwdC/FmdC family.

This is an uncharacterized protein from Methanocaldococcus jannaschii (strain ATCC 43067 / DSM 2661 / JAL-1 / JCM 10045 / NBRC 100440) (Methanococcus jannaschii).